The following is a 115-amino-acid chain: T cell receptor beta variable 7-2 (115 aa).

Positions 1–21 are cleaved as a signal peptide; it reads MGTRLLFWVAFCLLGADHTGA. Residues 22–115 enclose the Ig-like domain; sequence GVSQSPSNKV…SAVYLCASSL (94 aa). Residues Cys42 and Cys111 are joined by a disulfide bond.

In terms of assembly, alpha-beta TR is a heterodimer composed of an alpha and beta chain; disulfide-linked. The alpha-beta TR is associated with the transmembrane signaling CD3 coreceptor proteins to form the TR-CD3 (TcR or TCR). The assembly of alpha-beta TR heterodimers with CD3 occurs in the endoplasmic reticulum where a single alpha-beta TR heterodimer associates with one CD3D-CD3E heterodimer, one CD3G-CD3E heterodimer and one CD247 homodimer forming a stable octameric structure. CD3D-CD3E and CD3G-CD3E heterodimers preferentially associate with TR alpha and TR beta chains, respectively. The association of the CD247 homodimer is the last step of TcR assembly in the endoplasmic reticulum and is required for transport to the cell surface.

It is found in the cell membrane. Its function is as follows. V region of the variable domain of T cell receptor (TR) beta chain that participates in the antigen recognition. Alpha-beta T cell receptors are antigen specific receptors which are essential to the immune response and are present on the cell surface of T lymphocytes. Recognize peptide-major histocompatibility (MH) (pMH) complexes that are displayed by antigen presenting cells (APC), a prerequisite for efficient T cell adaptive immunity against pathogens. Binding of alpha-beta TR to pMH complex initiates TR-CD3 clustering on the cell surface and intracellular activation of LCK that phosphorylates the ITAM motifs of CD3G, CD3D, CD3E and CD247 enabling the recruitment of ZAP70. In turn ZAP70 phosphorylates LAT, which recruits numerous signaling molecules to form the LAT signalosome. The LAT signalosome propagates signal branching to three major signaling pathways, the calcium, the mitogen-activated protein kinase (MAPK) kinase and the nuclear factor NF-kappa-B (NF-kB) pathways, leading to the mobilization of transcription factors that are critical for gene expression and essential for T cell growth and differentiation. The T cell repertoire is generated in the thymus, by V-(D)-J rearrangement. This repertoire is then shaped by intrathymic selection events to generate a peripheral T cell pool of self-MH restricted, non-autoaggressive T cells. Post-thymic interaction of alpha-beta TR with the pMH complexes shapes TR structural and functional avidity. The polypeptide is T cell receptor beta variable 7-2 (Homo sapiens (Human)).